Consider the following 100-residue polypeptide: MKYRIFKMKYTLLFLSVIALVHIFAVEAKDEPESDALVPQERGCLDIGKTCKDDCECCGCGNVCYCPFDWFGGKWQPFGCSCAYGLKYVCAHKQKKCPNV.

Residues 1-28 (MKYRIFKMKYTLLFLSVIALVHIFAVEA) form the signal peptide. Positions 29–41 (KDEPESDALVPQE) are excised as a propeptide. 5 disulfide bridges follow: C44–C58, C51–C64, C57–C82, C66–C80, and C90–C97.

It belongs to the neurotoxin 09 (Tx3-6) family. Expressed by the venom gland.

Its subcellular location is the secreted. Its function is as follows. Probable neurotoxin. The polypeptide is U12-ctenitoxin-Pn1a (Phoneutria nigriventer (Brazilian armed spider)).